A 318-amino-acid polypeptide reads, in one-letter code: N-acyl-aromatic-L-amino acid amidohydrolase (carboxylate-forming) (318 aa).

The hydrolytic domain stretch occupies residues 1-210 (MSSLPGSREP…ILDFIELFNQ (210 aa)). 2 residues coordinate Zn(2+): His-21 and Glu-24. Substrate contacts are provided by residues Arg-63 and 70-71 (NR). His-116 contacts Zn(2+). The substrate site is built by Glu-177 and Tyr-287. Residues 211-318 (GMDLPAFEMD…RLTPRSTQTP (108 aa)) form a shielding domain region. A Phosphothreonine modification is found at Thr-317.

Belongs to the AspA/AstE family. Aspartoacylase subfamily. Exists as a mixture of homodimers and homotetramer, both catalytically active. Zn(2+) serves as cofactor. In terms of tissue distribution, expressed predominantly in kidney and to a lesser extent in liver. Weakly expressed in heart, small intestine, brain, lung, testis, and stomach.

The protein resides in the apical cell membrane. The protein localises to the cytoplasm. The catalysed reaction is an N-acyl-aromatic L-alpha-amino acid + H2O = an aromatic L-alpha-amino acid + a carboxylate. It catalyses the reaction an N-acetyl-L-cysteine-S-conjugate + H2O = an S-substituted L-cysteine + acetate. Its function is as follows. Plays an important role in deacetylating mercapturic acids in kidney proximal tubules. Also acts on N-acetyl-aromatic amino acids. This chain is N-acyl-aromatic-L-amino acid amidohydrolase (carboxylate-forming) (Acy3), found in Mus musculus (Mouse).